We begin with the raw amino-acid sequence, 1099 residues long: Transmembrane protein 132D (1099 aa).

Positions 1-30 (MCPSEMGTLWHHWSPVLISLAALFSKVTEG) are cleaved as a signal peptide. The Extracellular portion of the chain corresponds to 31 to 915 (RGILESIQRF…LMQASKGLSD (885 aa)). An N-linked (GlcNAc...) asparagine glycan is attached at asparagine 505. Positions 797–858 (FGQNDANPNT…LMEGRGTTTD (62 aa)) are disordered. A compositionally biased stretch (low complexity) spans 835-848 (GSQEGQYYGSSSMG). A helical transmembrane segment spans residues 916–936 (LEIGMYALLGVFCLAILVFLI). The Cytoplasmic portion of the chain corresponds to 937-1099 (NCVTFALKYR…NYMERLHENV (163 aa)).

The protein belongs to the TMEM132 family. In terms of assembly, interacts (via C-terminus) with NCKAP. As to expression, expressed in mature oligodendrocytes. Detected in the brain, lung, pancreas and testis. Highly expressed in mature neurons of the adult nervous system.

It is found in the membrane. In terms of biological role, regulate neuronals morphology via inhibition of the WAVE regulatory complex (WCR), a complex that controls F-actin cytoskeletal dynamics. The polypeptide is Transmembrane protein 132D (Homo sapiens (Human)).